A 350-amino-acid chain; its full sequence is Nuclear pore complex-interacting protein family member A3 (350 aa).

Positions 306 to 325 (KTPPECLLTPLPPSAPPSVD) are disordered.

The protein belongs to the NPIP family.

This Homo sapiens (Human) protein is Nuclear pore complex-interacting protein family member A3 (NPIPA3).